Consider the following 364-residue polypeptide: Anthranilate phosphoribosyltransferase (364 aa).

Polar residues predominate over residues 1–10; sequence MTSGPSQPFP. Positions 1-22 are disordered; the sequence is MTSGPSQPFPSASGPDDGPSWP. Residues glycine 101, 104–105, threonine 109, 111–114, 129–137, and glycine 141 each bind 5-phospho-alpha-D-ribose 1-diphosphate; these read GD, NLST, and KHGNRAASS. Glycine 101 is an anthranilate binding site. Residue serine 113 coordinates Mg(2+). Asparagine 132 is a binding site for anthranilate. Residue arginine 187 participates in anthranilate binding. Aspartate 245 and glutamate 246 together coordinate Mg(2+).

Belongs to the anthranilate phosphoribosyltransferase family. In terms of assembly, homodimer. Requires Mg(2+) as cofactor.

It carries out the reaction N-(5-phospho-beta-D-ribosyl)anthranilate + diphosphate = 5-phospho-alpha-D-ribose 1-diphosphate + anthranilate. The protein operates within amino-acid biosynthesis; L-tryptophan biosynthesis; L-tryptophan from chorismate: step 2/5. Functionally, catalyzes the transfer of the phosphoribosyl group of 5-phosphorylribose-1-pyrophosphate (PRPP) to anthranilate to yield N-(5'-phosphoribosyl)-anthranilate (PRA). This chain is Anthranilate phosphoribosyltransferase, found in Mycolicibacterium smegmatis (strain ATCC 700084 / mc(2)155) (Mycobacterium smegmatis).